The chain runs to 770 residues: MVAPALLPELWTEILVPICAVIGIAFSLFQWYVVSRVKLTSDLGASSSGGANNGKNGYGDYLIEEEEGVNDQSVVAKCAEIQTAISEGATSFLFTEYKYVGVFMIFFAAVIFVFLGSVEGFSTDNKPCTYDTTRTCKPALATAAFSTIAFVLGAVTSVLSGFLGMKIATYANARTTLEARKGVGKAFIVAFRSGAVMGFLLAASGLLVLYITINVFKIYYGDDWEGLFEAITGYGLGGSSMALFGRVGGGIYTKAADVGADLVGKIERNIPEDDPRNPAVIADNVGDNVGDIAGMGSDLFGSYAEASCAALVVASISSFGINHDFTAMCYPLLISSMGILVCLITTLFATDFFEIKLVKEIEPALKNQLIISTVIMTVGIAIVSWVGLPTSFTIFNFGTQKVVKNWQLFLCVCVGLWAGLIIGFVTEYYTSNAYSPVQDVADSCRTGAATNVIFGLALGYKSVIIPIFAIAISIFVSFSFAAMYGVAVAALGMLSTIATGLAIDAYGPISDNAGGIAEMAGMSHRIRERTDALDAAGNTTAAIGKGFAIGSAALVSLALFGAFVSRAGIHTVDVLTPKVIIGLLVGAMLPYWFSAMTMKSVGSAALKMVEEVRRQFNTIPGLMEGTAKPDYATCVKISTDASIKEMIPPGCLVMLTPLIVGFFFGVETLSGVLAGSLVSGVQIAISASNTGGAWDNAKKYIEAGVSEHAKSLGPKGSEPHKAAVIGDTIGDPLKDTSGPSLNILIKLMAVESLVFAPFFATHGGILFKYF.

Topologically, residues 1–9 (MVAPALLPE) are intravacuolar. A helical transmembrane segment spans residues 10–36 (LWTEILVPICAVIGIAFSLFQWYVVSR). Residues 37–88 (VKLTSDLGASSSGGANNGKNGYGDYLIEEEEGVNDQSVVAKCAEIQTAISEG) lie on the Cytoplasmic side of the membrane. The helical transmembrane segment at 89 to 118 (ATSFLFTEYKYVGVFMIFFAAVIFVFLGSV) threads the bilayer. Residues 119–139 (EGFSTDNKPCTYDTTRTCKPA) lie on the Intravacuolar side of the membrane. A disulfide bridge links cysteine 128 with cysteine 136. Residues 140–167 (LATAAFSTIAFVLGAVTSVLSGFLGMKI) form a helical membrane-spanning segment. The Cytoplasmic segment spans residues 168-190 (ATYANARTTLEARKGVGKAFIVA). Residues 191-220 (FRSGAVMGFLLAASGLLVLYITINVFKIYY) form a helical membrane-spanning segment. At 221 to 223 (GDD) the chain is on the intravacuolar side. The helical transmembrane segment at 224–252 (WEGLFEAITGYGLGGSSMALFGRVGGGIY) threads the bilayer. At 253–290 (TKAADVGADLVGKIERNIPEDDPRNPAVIADNVGDNVG) the chain is on the cytoplasmic side. Lysine 254 is a binding site for substrate. 3 residues coordinate Mg(2+): aspartate 257, aspartate 261, and aspartate 287. Residues 291-316 (DIAGMGSDLFGSYAEASCAALVVASI) form a helical membrane-spanning segment. The Intravacuolar portion of the chain corresponds to 317–324 (SSFGINHD). A helical membrane pass occupies residues 325–350 (FTAMCYPLLISSMGILVCLITTLFAT). Residues 351–358 (DFFEIKLV) are Cytoplasmic-facing. Residues 359-386 (KEIEPALKNQLIISTVIMTVGIAIVSWV) form a helical membrane-spanning segment. Topologically, residues 387 to 405 (GLPTSFTIFNFGTQKVVKN) are intravacuolar. The chain crosses the membrane as a helical span at residues 406-429 (WQLFLCVCVGLWAGLIIGFVTEYY). The Cytoplasmic segment spans residues 430 to 451 (TSNAYSPVQDVADSCRTGAATN). A helical membrane pass occupies residues 452-476 (VIFGLALGYKSVIIPIFAIAISIFV). Over 477–482 (SFSFAA) the chain is Intravacuolar. A helical membrane pass occupies residues 483-509 (MYGVAVAALGMLSTIATGLAIDAYGPI). Topologically, residues 510-538 (SDNAGGIAEMAGMSHRIRERTDALDAAGN) are cytoplasmic. Mg(2+) contacts are provided by aspartate 511 and asparagine 538. The chain crosses the membrane as a helical span at residues 539–567 (TTAAIGKGFAIGSAALVSLALFGAFVSRA). Residues 568 to 577 (GIHTVDVLTP) are Intravacuolar-facing. The chain crosses the membrane as a helical span at residues 578–606 (KVIIGLLVGAMLPYWFSAMTMKSVGSAAL). At 607-635 (KMVEEVRRQFNTIPGLMEGTAKPDYATCV) the chain is on the cytoplasmic side. Residues 636-664 (KISTDASIKEMIPPGCLVMLTPLIVGFFF) traverse the membrane as a helical segment. A topological domain (intravacuolar) is located at residue glycine 665. Residues 666 to 693 (VETLSGVLAGSLVSGVQIAISASNTGGA) traverse the membrane as a helical segment. Topologically, residues 694–736 (WDNAKKYIEAGVSEHAKSLGPKGSEPHKAAVIGDTIGDPLKDT) are cytoplasmic. Residues aspartate 695 and aspartate 731 each coordinate Mg(2+). Lysine 734 provides a ligand contact to substrate. A helical membrane pass occupies residues 737–762 (SGPSLNILIKLMAVESLVFAPFFATH). Residues 763-770 (GGILFKYF) lie on the Intravacuolar side of the membrane.

This sequence belongs to the H(+)-translocating pyrophosphatase (TC 3.A.10) family. K(+)-stimulated subfamily. In terms of assembly, monomer. In terms of tissue distribution, ubiquitous (at protein level). Mostly expressed in vascular tissues, meristems and root pericycle.

Its subcellular location is the vacuole membrane. It is found in the endosome membrane. It localises to the cell membrane. It carries out the reaction diphosphate + H2O + H(+)(in) = 2 phosphate + 2 H(+)(out). Its activity is regulated as follows. Activated by K(+) and Mg(2+). Inhibited by Ca(2+), N,N'-dicyclohexylcarbodiimide (DCCD), N-ethylmaleimide (NEM) and aminomethylenediphosphonate (AMDP), and, to a lower extent, by fluoride (KF). Its function is as follows. Contributes to the transtonoplast (from cytosol to vacuole lumen) H(+)-electrochemical potential difference. It establishes a proton gradient of similar and often greater magnitude than the H(+)-ATPase on the same membrane. In addition, facilitates auxin transport by modulating apoplastic pH and regulates auxin-mediated developmental processes. Confers tolerance to NaCl and to drought by increasing ion retention. The chain is Pyrophosphate-energized vacuolar membrane proton pump 1 (AVP1) from Arabidopsis thaliana (Mouse-ear cress).